A 256-amino-acid chain; its full sequence is uncharacterized protein (256 aa).

A run of 3 helical transmembrane segments spans residues 42–62 (LIAL…IWFF), 73–93 (FFTL…LIFL), and 108–128 (WLFL…WLIV).

The protein localises to the cell membrane. This is an uncharacterized protein from Mycoplasma genitalium (strain ATCC 33530 / DSM 19775 / NCTC 10195 / G37) (Mycoplasmoides genitalium).